A 411-amino-acid chain; its full sequence is Acetylornithine aminotransferase (411 aa).

Pyridoxal 5'-phosphate contacts are provided by residues 107-108 and phenylalanine 141; that span reads GT. Arginine 144 is a binding site for N(2)-acetyl-L-ornithine. 227-230 lines the pyridoxal 5'-phosphate pocket; that stretch reads DEIQ. An N6-(pyridoxal phosphate)lysine modification is found at lysine 256. Threonine 284 lines the N(2)-acetyl-L-ornithine pocket. Threonine 285 provides a ligand contact to pyridoxal 5'-phosphate.

Belongs to the class-III pyridoxal-phosphate-dependent aminotransferase family. ArgD subfamily. In terms of assembly, homodimer. Requires pyridoxal 5'-phosphate as cofactor.

Its subcellular location is the cytoplasm. It carries out the reaction N(2)-acetyl-L-ornithine + 2-oxoglutarate = N-acetyl-L-glutamate 5-semialdehyde + L-glutamate. It participates in amino-acid biosynthesis; L-arginine biosynthesis; N(2)-acetyl-L-ornithine from L-glutamate: step 4/4. The sequence is that of Acetylornithine aminotransferase from Xylella fastidiosa (strain Temecula1 / ATCC 700964).